We begin with the raw amino-acid sequence, 457 residues long: Ribosomal protein uS12 methylthiotransferase RimO (457 aa).

The region spanning 30 to 140 (PTIGMVSLGC…VLDAVHGAVP (111 aa)) is the MTTase N-terminal domain. [4Fe-4S] cluster is bound by residues cysteine 39, cysteine 75, cysteine 104, cysteine 171, cysteine 175, and cysteine 178. The Radical SAM core domain maps to 157–386 (LTPRHFSYLK…MQKAQAISEA (230 aa)). A TRAM domain is found at 389–456 (AARIGQRLEV…EYDLWGRAVL (68 aa)).

Belongs to the methylthiotransferase family. RimO subfamily. [4Fe-4S] cluster is required as a cofactor.

The protein resides in the cytoplasm. It carries out the reaction L-aspartate(89)-[ribosomal protein uS12]-hydrogen + (sulfur carrier)-SH + AH2 + 2 S-adenosyl-L-methionine = 3-methylsulfanyl-L-aspartate(89)-[ribosomal protein uS12]-hydrogen + (sulfur carrier)-H + 5'-deoxyadenosine + L-methionine + A + S-adenosyl-L-homocysteine + 2 H(+). Catalyzes the methylthiolation of an aspartic acid residue of ribosomal protein uS12. The sequence is that of Ribosomal protein uS12 methylthiotransferase RimO from Cereibacter sphaeroides (strain ATCC 17025 / ATH 2.4.3) (Rhodobacter sphaeroides).